Consider the following 122-residue polypeptide: Large ribosomal subunit protein uL14 (122 aa).

It belongs to the universal ribosomal protein uL14 family. In terms of assembly, part of the 50S ribosomal subunit. Forms a cluster with proteins L3 and L19. In the 70S ribosome, L14 and L19 interact and together make contacts with the 16S rRNA in bridges B5 and B8.

In terms of biological role, binds to 23S rRNA. Forms part of two intersubunit bridges in the 70S ribosome. This is Large ribosomal subunit protein uL14 from Pelagibacter ubique (strain HTCC1062).